A 506-amino-acid chain; its full sequence is MKPLSIKAEEISALIKQQLEKYDDKLNVNEVGTVTYVGDGIARAHGLNNVLSSELLQFSNGSYGIAQNLEANDVGIIILGRFDDIREGDQVKRTGRIMEVPVGDQLIGRVVNPLGQPVDGLGEIKTDKTRPIESKAPGVMDRQSVNQPLQTGIKAIDALVPIGRGQRELIIGDRKTGKTALALDTIINQKGQDVICIYVAIGQKESTVKNSVETLKRFGAMDYTIVVEAGPSEPAPMLYIAPYAGTAMGEEFMYNGKDVLIVFDDLSKQAVAYREISLLLRRPPGREAYPGDVFYLHSRLLERSAKLNKKLGGGSMTALPFIQTQAGDISAYIPTNVISITDGQIFLEADLFFAGTRPAINAGESVSRVGGSAQIKAMKKVAGTLRVDLASYRELESFAQFGSDLDQATQAKLNRGRRTVEVLKQPLHKPLPVEDEVLILYALTHGFLDAIPVPDIQRYELELYDYFASNYNDLLDVIRTTGDLPEEAKLNEALKNFNEGFSISKK.

172–179 contributes to the ATP binding site; the sequence is GDRKTGKT.

It belongs to the ATPase alpha/beta chains family. As to quaternary structure, F-type ATPases have 2 components, CF(1) - the catalytic core - and CF(0) - the membrane proton channel. CF(1) has five subunits: alpha(3), beta(3), gamma(1), delta(1), epsilon(1). CF(0) has three main subunits: a(1), b(2) and c(9-12). The alpha and beta chains form an alternating ring which encloses part of the gamma chain. CF(1) is attached to CF(0) by a central stalk formed by the gamma and epsilon chains, while a peripheral stalk is formed by the delta and b chains.

Its subcellular location is the cell membrane. The enzyme catalyses ATP + H2O + 4 H(+)(in) = ADP + phosphate + 5 H(+)(out). Functionally, produces ATP from ADP in the presence of a proton gradient across the membrane. The alpha chain is a regulatory subunit. In Lactobacillus gasseri (strain ATCC 33323 / DSM 20243 / BCRC 14619 / CIP 102991 / JCM 1131 / KCTC 3163 / NCIMB 11718 / NCTC 13722 / AM63), this protein is ATP synthase subunit alpha.